The sequence spans 340 residues: Holliday junction branch migration complex subunit RuvB (340 aa).

The tract at residues 1–184 (MNENLDPTNQ…FGIQSRLQYY (184 aa)) is large ATPase domain (RuvB-L). ATP-binding positions include Leu-23, Arg-24, Gly-65, Lys-68, Thr-69, Thr-70, 131–133 (EDF), Arg-174, Tyr-184, and Arg-221. Thr-69 is a binding site for Mg(2+). The tract at residues 185 to 255 (NAELLTTIVQ…IAKFALNALH (71 aa)) is small ATPAse domain (RuvB-S). The interval 258–340 (AHGLDEMDNK…VKANVQGGLF (83 aa)) is head domain (RuvB-H). DNA is bound by residues Arg-313 and Arg-318.

The protein belongs to the RuvB family. As to quaternary structure, homohexamer. Forms an RuvA(8)-RuvB(12)-Holliday junction (HJ) complex. HJ DNA is sandwiched between 2 RuvA tetramers; dsDNA enters through RuvA and exits via RuvB. An RuvB hexamer assembles on each DNA strand where it exits the tetramer. Each RuvB hexamer is contacted by two RuvA subunits (via domain III) on 2 adjacent RuvB subunits; this complex drives branch migration. In the full resolvosome a probable DNA-RuvA(4)-RuvB(12)-RuvC(2) complex forms which resolves the HJ.

It localises to the cytoplasm. It catalyses the reaction ATP + H2O = ADP + phosphate + H(+). The RuvA-RuvB-RuvC complex processes Holliday junction (HJ) DNA during genetic recombination and DNA repair, while the RuvA-RuvB complex plays an important role in the rescue of blocked DNA replication forks via replication fork reversal (RFR). RuvA specifically binds to HJ cruciform DNA, conferring on it an open structure. The RuvB hexamer acts as an ATP-dependent pump, pulling dsDNA into and through the RuvAB complex. RuvB forms 2 homohexamers on either side of HJ DNA bound by 1 or 2 RuvA tetramers; 4 subunits per hexamer contact DNA at a time. Coordinated motions by a converter formed by DNA-disengaged RuvB subunits stimulates ATP hydrolysis and nucleotide exchange. Immobilization of the converter enables RuvB to convert the ATP-contained energy into a lever motion, pulling 2 nucleotides of DNA out of the RuvA tetramer per ATP hydrolyzed, thus driving DNA branch migration. The RuvB motors rotate together with the DNA substrate, which together with the progressing nucleotide cycle form the mechanistic basis for DNA recombination by continuous HJ branch migration. Branch migration allows RuvC to scan DNA until it finds its consensus sequence, where it cleaves and resolves cruciform DNA. In Flavobacterium psychrophilum (strain ATCC 49511 / DSM 21280 / CIP 103535 / JIP02/86), this protein is Holliday junction branch migration complex subunit RuvB.